A 736-amino-acid polypeptide reads, in one-letter code: Prolyl 3-hydroxylase 3 (736 aa).

Positions 1–20 are cleaved as a signal peptide; it reads MLRLLRPLLLLLLLPPPGSP. TPR repeat units follow at residues 37–70, 154–187, and 216–249; these read PDLL…QAAL, REPY…NPMH, and HWAA…SLAQ. Residues 253-275 form a disordered region; it reads CRADCEGPEEQQGAEEEEDGAAS. Residues 258–272 are compositionally biased toward acidic residues; the sequence is EGPEEQQGAEEEEDG. The TPR 4 repeat unit spans residues 316–349; sequence PNQLRRLHEAHAQVGNLSQAIENVLSVLLFYPED. N-linked (GlcNAc...) asparagine glycosylation is found at N331 and N462. The 115-residue stretch at 561 to 675 folds into the Fe2OG dioxygenase domain; that stretch reads THLVCRSAIE…RCALALWHTW (115 aa). Residues H584, D586, and H656 each contribute to the Fe cation site. The active site involves R666. A coiled-coil region spans residues 681–709; the sequence is EQEWIEAKELLQESQEEEEEEEEEMPSKD. The tract at residues 689–736 is disordered; that stretch reads ELLQESQEEEEEEEEEMPSKDPSPEPPSRRHQRVQDKTGRAPRVREEL. Over residues 694 to 704 the composition is skewed to acidic residues; the sequence is SQEEEEEEEEE. Positions 721–736 are enriched in basic and acidic residues; sequence RVQDKTGRAPRVREEL. The short motif at 733 to 736 is the Prevents secretion from ER element; that stretch reads REEL.

Belongs to the leprecan family. In terms of assembly, identified in a complex with PLOD1 and P3H4. Fe cation serves as cofactor. L-ascorbate is required as a cofactor. Detected in fetal cartilage (at protein level). Weak expression in heart, lung, ovary and skeletal muscle.

The protein resides in the endoplasmic reticulum. It catalyses the reaction L-prolyl-[collagen] + 2-oxoglutarate + O2 = trans-3-hydroxy-L-prolyl-[collagen] + succinate + CO2. In terms of biological role, part of a complex composed of PLOD1, P3H3 and P3H4 that catalyzes hydroxylation of lysine residues in collagen alpha chains and is required for normal assembly and cross-linkling of collagen fibrils. Required for normal hydroxylation of lysine residues in type I collagen chains in skin, bone, tendon, aorta and cornea. Required for normal skin stability via its role in hydroxylation of lysine residues in collagen alpha chains and in collagen fibril assembly. Apparently not required for normal prolyl 3-hydroxylation on collagen chains, possibly because it functions redundantly with other prolyl 3-hydroxylases. The chain is Prolyl 3-hydroxylase 3 from Homo sapiens (Human).